The following is a 165-amino-acid chain: HTH-type transcriptional regulator IscR (165 aa).

The 130-residue stretch at 2–131 (RLTSKGRYAV…NNITLAELVN (130 aa)) folds into the HTH rrf2-type domain. Positions 28-51 (LADISERQGISLSYLEQLFSRLRK) form a DNA-binding region, H-T-H motif. [2Fe-2S] cluster is bound by residues C92, C98, and C104.

The cofactor is [2Fe-2S] cluster.

Functionally, regulates the transcription of several operons and genes involved in the biogenesis of Fe-S clusters and Fe-S-containing proteins. The protein is HTH-type transcriptional regulator IscR of Erwinia tasmaniensis (strain DSM 17950 / CFBP 7177 / CIP 109463 / NCPPB 4357 / Et1/99).